The sequence spans 422 residues: COUP transcription factor 1 (422 aa).

The tract at residues 1–80 is disordered; it reads MAMVVSSWRD…QGPPGSGQSQ (80 aa). A compositionally biased stretch (low complexity) spans 39-66; sequence EQQQAGSGAPHTPQTPGQPGAPATPGTQ. Positions 82-157 form a DNA-binding region, nuclear receptor; sequence HIECVVCGDK…VGMRREAVQR (76 aa). NR C4-type zinc fingers lie at residues 85–105 and 121–145; these read CVVCGDKSSGKHYGQFTCEGC and CRANRNCPIDQHHRNQCQYCRLKKC. The region spanning 183–409 is the NR LBD domain; it reads YLSGYISLLL…TLIRDMLLSG (227 aa). Residues 343–422 are important for dimerization; that stretch reads LQEKSQCALE…NWPYMSIQCS (80 aa).

Belongs to the nuclear hormone receptor family. NR2 subfamily. In terms of assembly, binds DNA as dimer; homodimer and probable heterodimer with NR2F6. Interacts with GTF2B; this interaction is direct. Interacts with COPS2.

It localises to the nucleus. Coup (chicken ovalbumin upstream promoter) transcription factor binds to the ovalbumin promoter and, in conjunction with another protein (S300-II) stimulates initiation of transcription. Binds to both direct repeats and palindromes of the 5'-AGGTCA-3' motif. Represses transcriptional activity of LHCG. This chain is COUP transcription factor 1 (Nr2f1), found in Mus musculus (Mouse).